Reading from the N-terminus, the 184-residue chain is Transmembrane protein 140 (184 aa).

Over 1 to 12 (MAISRVWRNRLS) the chain is Cytoplasmic. Residues 13–33 (FMAIMILVAMVLSLMSYALLW) form a helical membrane-spanning segment. The Extracellular portion of the chain corresponds to 34–83 (KAGNLTDVPNLRIGFYNFCLWKEDIGSLECYNFPELGVLGIPQVGLALAR). Residue Asn-37 is glycosylated (N-linked (GlcNAc...) asparagine). A helical transmembrane segment spans residues 84–104 (LGVYGALVLAVFVPLPLLLAQ). Residues 105-117 (CNSDEGEWRLAVG) lie on the Cytoplasmic side of the membrane. The chain crosses the membrane as a helical span at residues 118–138 (FLGASSVLLAGGLSLFLFLVW). Topologically, residues 139–149 (KWLRLSFLGPG) are extracellular. Residues 150–170 (FLSLCLAQALLIILLMAMVMF) form a helical membrane-spanning segment. Residues 171–184 (PPRDKKDKNHWENC) are Cytoplasmic-facing.

It localises to the membrane. The protein is Transmembrane protein 140 (Tmem140) of Rattus norvegicus (Rat).